Consider the following 330-residue polypeptide: 1-aminocyclopropane-1-carboxylate oxidase 2 (330 aa).

A Fe2OG dioxygenase domain is found at 153–253 (PNFGTKVSNY…RMSIASFYNP (101 aa)). Fe cation-binding residues include His-177, Asp-179, and His-234.

The protein belongs to the iron/ascorbate-dependent oxidoreductase family. Monomer. The cofactor is Fe cation.

It catalyses the reaction 1-aminocyclopropane-1-carboxylate + L-ascorbate + O2 = ethene + L-dehydroascorbate + hydrogen cyanide + CO2 + 2 H2O. The protein operates within alkene biosynthesis; ethylene biosynthesis via S-adenosyl-L-methionine; ethylene from S-adenosyl-L-methionine: step 2/2. The protein is 1-aminocyclopropane-1-carboxylate oxidase 2 (ACO2) of Malus domestica (Apple).